A 220-amino-acid chain; its full sequence is Deoxyribose-phosphate aldolase (220 aa).

Asp-89 acts as the Proton donor/acceptor in catalysis. Residue Lys-151 is the Schiff-base intermediate with acetaldehyde of the active site. The active-site Proton donor/acceptor is the Lys-180.

The protein belongs to the DeoC/FbaB aldolase family. DeoC type 1 subfamily.

Its subcellular location is the cytoplasm. It carries out the reaction 2-deoxy-D-ribose 5-phosphate = D-glyceraldehyde 3-phosphate + acetaldehyde. It functions in the pathway carbohydrate degradation; 2-deoxy-D-ribose 1-phosphate degradation; D-glyceraldehyde 3-phosphate and acetaldehyde from 2-deoxy-alpha-D-ribose 1-phosphate: step 2/2. In terms of biological role, catalyzes a reversible aldol reaction between acetaldehyde and D-glyceraldehyde 3-phosphate to generate 2-deoxy-D-ribose 5-phosphate. This chain is Deoxyribose-phosphate aldolase, found in Streptococcus suis (strain 98HAH33).